Consider the following 261-residue polypeptide: MSRKSLIAGNWKMNLNHFEAIALVQKIAFSLPDKYYDKVDVTVLPPFTDLRSVQTLVDGDKLRLTYGAQDLSQHDLGAYTGDISGAFLAKLGCSFVLVGHSERRTYHDEGDALVAAKTAAALKNSLTPIVCIGEYLEIREVGEHVSHCQNQLRGSLAGLSPEQIGNVVIVYEPVWAIGTGRVASAADAQEVCEAIRKELGALASPQVAETVRVLYGGSLNAKNIGDIVAQQDVDGGLVGGASLDGAQFATLAVIAAGGPLP.

10-12 is a substrate binding site; the sequence is NWK. His-100 (electrophile) is an active-site residue. Glu-172 (proton acceptor) is an active-site residue. Substrate contacts are provided by residues Gly-178, Ser-218, and 239–240; that span reads GG.

It belongs to the triosephosphate isomerase family. As to quaternary structure, homodimer.

It is found in the cytoplasm. It carries out the reaction D-glyceraldehyde 3-phosphate = dihydroxyacetone phosphate. Its pathway is carbohydrate biosynthesis; gluconeogenesis. It participates in carbohydrate degradation; glycolysis; D-glyceraldehyde 3-phosphate from glycerone phosphate: step 1/1. Involved in the gluconeogenesis. Catalyzes stereospecifically the conversion of dihydroxyacetone phosphate (DHAP) to D-glyceraldehyde-3-phosphate (G3P). The chain is Triosephosphate isomerase from Mycobacterium leprae (strain TN).